Reading from the N-terminus, the 65-residue chain is Large ribosomal subunit protein bL35 (65 aa).

The tract at residues 1-22 (MPKIKTVRGAAKRFKKTGKGGF) is disordered. Residues 10 to 22 (AAKRFKKTGKGGF) show a composition bias toward basic residues.

The protein belongs to the bacterial ribosomal protein bL35 family.

The chain is Large ribosomal subunit protein bL35 from Escherichia coli O127:H6 (strain E2348/69 / EPEC).